Here is a 170-residue protein sequence, read N- to C-terminus: MNLRDKIAEYPNFPKKGILFRDFSPILKDPSAMESIADEFSKYFHPKNIDIFAGIESRGFILACILATRYNKGMMMIRKAGKLPGKTTKISYTIEYGKDTIEIQKDIIEEGQRVLICDDLLATGGTAKAAAKLIEKVGGKIVGFAFIIELTDLNGMKGISKYDCKSLVKY.

This sequence belongs to the purine/pyrimidine phosphoribosyltransferase family. As to quaternary structure, homodimer.

The protein localises to the cytoplasm. It carries out the reaction AMP + diphosphate = 5-phospho-alpha-D-ribose 1-diphosphate + adenine. It functions in the pathway purine metabolism; AMP biosynthesis via salvage pathway; AMP from adenine: step 1/1. Catalyzes a salvage reaction resulting in the formation of AMP, that is energically less costly than de novo synthesis. This is Adenine phosphoribosyltransferase from Nitrosopumilus maritimus (strain SCM1).